The sequence spans 202 residues: Dephospho-CoA kinase (202 aa).

In terms of domain architecture, DPCK spans 5-202; that stretch reads IVGLTGGIAS…DADYRARSDR (198 aa). 13–18 lines the ATP pocket; sequence ASGKSA.

This sequence belongs to the CoaE family.

Its subcellular location is the cytoplasm. It carries out the reaction 3'-dephospho-CoA + ATP = ADP + CoA + H(+). Its pathway is cofactor biosynthesis; coenzyme A biosynthesis; CoA from (R)-pantothenate: step 5/5. Its function is as follows. Catalyzes the phosphorylation of the 3'-hydroxyl group of dephosphocoenzyme A to form coenzyme A. This is Dephospho-CoA kinase from Xanthomonas oryzae pv. oryzae (strain MAFF 311018).